Reading from the N-terminus, the 337-residue chain is 4-hydroxy-3-methylbut-2-enyl diphosphate reductase (337 aa).

Position 38 (C38) interacts with [4Fe-4S] cluster. H67 and H100 together coordinate (2E)-4-hydroxy-3-methylbut-2-enyl diphosphate. Positions 67 and 100 each coordinate dimethylallyl diphosphate. The isopentenyl diphosphate site is built by H67 and H100. Position 122 (C122) interacts with [4Fe-4S] cluster. (2E)-4-hydroxy-3-methylbut-2-enyl diphosphate is bound at residue H150. Dimethylallyl diphosphate is bound at residue H150. H150 contributes to the isopentenyl diphosphate binding site. E152 serves as the catalytic Proton donor. (2E)-4-hydroxy-3-methylbut-2-enyl diphosphate is bound at residue T190. C220 contacts [4Fe-4S] cluster. S248, S249, N250, and S293 together coordinate (2E)-4-hydroxy-3-methylbut-2-enyl diphosphate. 4 residues coordinate dimethylallyl diphosphate: S248, S249, N250, and S293. 4 residues coordinate isopentenyl diphosphate: S248, S249, N250, and S293.

It belongs to the IspH family. [4Fe-4S] cluster is required as a cofactor.

It carries out the reaction isopentenyl diphosphate + 2 oxidized [2Fe-2S]-[ferredoxin] + H2O = (2E)-4-hydroxy-3-methylbut-2-enyl diphosphate + 2 reduced [2Fe-2S]-[ferredoxin] + 2 H(+). The enzyme catalyses dimethylallyl diphosphate + 2 oxidized [2Fe-2S]-[ferredoxin] + H2O = (2E)-4-hydroxy-3-methylbut-2-enyl diphosphate + 2 reduced [2Fe-2S]-[ferredoxin] + 2 H(+). It participates in isoprenoid biosynthesis; dimethylallyl diphosphate biosynthesis; dimethylallyl diphosphate from (2E)-4-hydroxy-3-methylbutenyl diphosphate: step 1/1. It functions in the pathway isoprenoid biosynthesis; isopentenyl diphosphate biosynthesis via DXP pathway; isopentenyl diphosphate from 1-deoxy-D-xylulose 5-phosphate: step 6/6. In terms of biological role, catalyzes the conversion of 1-hydroxy-2-methyl-2-(E)-butenyl 4-diphosphate (HMBPP) into a mixture of isopentenyl diphosphate (IPP) and dimethylallyl diphosphate (DMAPP). Acts in the terminal step of the DOXP/MEP pathway for isoprenoid precursor biosynthesis. The protein is 4-hydroxy-3-methylbut-2-enyl diphosphate reductase of Mycolicibacterium vanbaalenii (strain DSM 7251 / JCM 13017 / BCRC 16820 / KCTC 9966 / NRRL B-24157 / PYR-1) (Mycobacterium vanbaalenii).